Consider the following 170-residue polypeptide: NADH-dependent flavin reductase StyB (170 aa).

This sequence belongs to the non-flavoprotein flavin reductase family. Homodimer.

The catalysed reaction is a reduced flavin + NAD(+) = an oxidized flavin + NADH + 2 H(+). The protein operates within aromatic compound metabolism. In terms of biological role, reductase component of a two-component system that catalyzes the first step in the aerobic styrene degradation pathway by enantioselective epoxidation of the vinyl side chain. Utilizes NADH to reduce FAD, which is then transferred to the styrene monooxygenase StyA. The sequence is that of NADH-dependent flavin reductase StyB (styB) from Pseudomonas fluorescens.